Reading from the N-terminus, the 142-residue chain is Large ribosomal subunit protein uL13 (142 aa).

This sequence belongs to the universal ribosomal protein uL13 family. In terms of assembly, part of the 50S ribosomal subunit.

Functionally, this protein is one of the early assembly proteins of the 50S ribosomal subunit, although it is not seen to bind rRNA by itself. It is important during the early stages of 50S assembly. The sequence is that of Large ribosomal subunit protein uL13 from Francisella tularensis subsp. holarctica (strain FTNF002-00 / FTA).